A 464-amino-acid chain; its full sequence is Siroheme synthase (464 aa).

The segment at 1 to 203 (MEFLPLFHNL…GQGAEAERLL (203 aa)) is precorrin-2 dehydrogenase /sirohydrochlorin ferrochelatase. NAD(+)-binding positions include 22-23 (EI) and 43-44 (PE). Ser128 is subject to Phosphoserine. A uroporphyrinogen-III C-methyltransferase region spans residues 216–464 (GEVYLVGAGP…AWFEGAQATV (249 aa)). Position 225 (Pro225) interacts with S-adenosyl-L-methionine. Asp248 serves as the catalytic Proton acceptor. Catalysis depends on Lys270, which acts as the Proton donor. S-adenosyl-L-methionine-binding positions include 301 to 303 (GGD), Ile306, 331 to 332 (TA), Met383, and Gly412.

This sequence in the N-terminal section; belongs to the precorrin-2 dehydrogenase / sirohydrochlorin ferrochelatase family. It in the C-terminal section; belongs to the precorrin methyltransferase family.

The catalysed reaction is uroporphyrinogen III + 2 S-adenosyl-L-methionine = precorrin-2 + 2 S-adenosyl-L-homocysteine + H(+). It catalyses the reaction precorrin-2 + NAD(+) = sirohydrochlorin + NADH + 2 H(+). It carries out the reaction siroheme + 2 H(+) = sirohydrochlorin + Fe(2+). It participates in cofactor biosynthesis; adenosylcobalamin biosynthesis; precorrin-2 from uroporphyrinogen III: step 1/1. The protein operates within cofactor biosynthesis; adenosylcobalamin biosynthesis; sirohydrochlorin from precorrin-2: step 1/1. It functions in the pathway porphyrin-containing compound metabolism; siroheme biosynthesis; precorrin-2 from uroporphyrinogen III: step 1/1. Its pathway is porphyrin-containing compound metabolism; siroheme biosynthesis; siroheme from sirohydrochlorin: step 1/1. It participates in porphyrin-containing compound metabolism; siroheme biosynthesis; sirohydrochlorin from precorrin-2: step 1/1. Its function is as follows. Multifunctional enzyme that catalyzes the SAM-dependent methylations of uroporphyrinogen III at position C-2 and C-7 to form precorrin-2 via precorrin-1. Then it catalyzes the NAD-dependent ring dehydrogenation of precorrin-2 to yield sirohydrochlorin. Finally, it catalyzes the ferrochelation of sirohydrochlorin to yield siroheme. In Pseudomonas savastanoi pv. phaseolicola (strain 1448A / Race 6) (Pseudomonas syringae pv. phaseolicola (strain 1448A / Race 6)), this protein is Siroheme synthase.